A 700-amino-acid chain; its full sequence is non-specific serine/threonine protein kinase Cdc7 (700 aa).

Positions 127-644 constitute a Protein kinase domain; it reads FDVHSRIGNG…AEEALKHPFF (518 aa). Residues 133 to 141 and Lys163 each bind ATP; that span reads IGNGTFSTV. Asp250 (proton acceptor) is an active-site residue.

It belongs to the protein kinase superfamily. Ser/Thr protein kinase family. In terms of assembly, component of the Dbf4-dependent kinase (DDK) complex consisting of Cdc7 and the Dbf4 ortholog chif. Interacts with chif (via the processed polypeptide Chiffon-A); the interaction is direct.

It carries out the reaction L-seryl-[protein] + ATP = O-phospho-L-seryl-[protein] + ADP + H(+). It catalyses the reaction L-threonyl-[protein] + ATP = O-phospho-L-threonyl-[protein] + ADP + H(+). Activated by chif. Inhibited by the synthetic compound XL413. Catalytic component of the Dbf4-dependent kinase (DDK) complex. Phosphorylates components of the pre-replication complex, including Mcm2 and, to a lesser extent, Mcm4. Phosphorylates histones, including H3 and H2B. Required for DNA replication and mitotic proliferation, including during the endoreplication and amplification stages of DNA replication in egg chamber follicle cells of the ovary. The chain is non-specific serine/threonine protein kinase Cdc7 from Drosophila melanogaster (Fruit fly).